Reading from the N-terminus, the 304-residue chain is Non-specific ribonucleoside hydrolase RihC (304 aa).

His233 is a catalytic residue.

It belongs to the IUNH family. RihC subfamily.

Functionally, hydrolyzes both purine and pyrimidine ribonucleosides with a broad-substrate specificity. This chain is Non-specific ribonucleoside hydrolase RihC, found in Escherichia coli O157:H7.